Reading from the N-terminus, the 1358-residue chain is Tenascin-R (1358 aa).

A signal peptide spans 1–31; the sequence is MGIDGETVVLKNMLIGVNLILLGSMLKPSEC. Residues 37-58 are disordered; sequence TERAQRQTVEEEGGASSYNTSS. An N-linked (GlcNAc...) asparagine glycan is attached at asparagine 55. Positions 127 to 157 form a coiled coil; that stretch reads CASSSQVLQELLSRIEMLEREVSLLRDQCNT. The O-linked (Xyl...) (chondroitin sulfate) serine glycan is linked to serine 176. N-linked (GlcNAc...) asparagine glycosylation is found at asparagine 180 and asparagine 198. EGF-like domains follow at residues 188-199, 219-230, and 250-261; these read CICNEGWFGKNC, CICDSEYSGDDC, and CVCEEPYTGEDC. Residue serine 271 is glycosylated (O-linked (Xyl...) (chondroitin sulfate) serine). Residue asparagine 278 is glycosylated (N-linked (GlcNAc...) asparagine). One can recognise an EGF-like 4 domain in the interval 281–292; it reads CLCQEGYAGEDC. Disulfide bonds link cysteine 297–cysteine 307 and cysteine 314–cysteine 323. A glycan (O-linked (Xyl...) (chondroitin sulfate) serine) is linked at serine 302. The 12-residue stretch at 312-323 folds into the EGF-like 5 domain; that stretch reads CICEEGYQGPDC. 9 Fibronectin type-III domains span residues 328–420, 421–505, 506–597, 598–687, 688–777, 778–865, 866–955, 956–1042, and 1043–1131; these read PPED…TPQG, LQFK…TVID, GPTQ…IDAP, KNLR…TELD, SPRD…FRPI, SHLH…TGID, PPKN…AMDS, PMDL…TLLD, and PPDN…GGRV. 3 N-linked (GlcNAc...) asparagine glycosylation sites follow: asparagine 392, asparagine 470, and asparagine 581. Position 724 is a phosphoserine (serine 724). N-linked (GlcNAc...) asparagine glycosylation is found at asparagine 791, asparagine 869, asparagine 874, asparagine 1036, asparagine 1046, and asparagine 1261. A Fibrinogen C-terminal domain is found at 1129–1344; sequence GRVFSHPQDC…FVEMKMRPYI (216 aa).

This sequence belongs to the tenascin family. In terms of assembly, interacts with BCAN and ACAN in a calcium-dependent manner. Interacts with SCN2B, PTPRZ1, and CSPG3. Forms oligomers. Isoforms 1 and 2 form respectively trimeric (tribrachion) and dimeric kink-armed rodlike structures, which are linked by disulfide bridges. Interacts with CNTN1, TNC and FN1. Contains N-linked oligosaccharides with a sulfated carbohydrate structures. Contains N-linked oligosaccharides, O-linked sialylated structures and O-linked chondroitin sulfate glycosaminoglycans. As to expression, brain-specific.

Its subcellular location is the secreted. The protein resides in the extracellular space. It localises to the extracellular matrix. Functionally, neural extracellular matrix (ECM) protein involved in interactions with different cells and matrix components. Theses interactions can influence cellular behavior by either evoking a stable adhesion and differentiation, or repulsion and inhibition of neurite growth. Binding to cell surface gangliosides inhibits RGD-dependent integrin-mediated cell adhesion and results in an inhibition of PTK2/FAK1 (FAK) phosphorylation and cell detachment. Binding to membrane surface sulfatides results in a oligodendrocyte adhesion and differentiation. Interaction with CNTN1 induces a repulsion of neurons and an inhibition of neurite outgrowth. Interacts with SCN2B may play a crucial role in clustering and regulation of activity of sodium channels at nodes of Ranvier. TNR-linked chondroitin sulfate glycosaminoglycans are involved in the interaction with FN1 and mediates inhibition of cell adhesion and neurite outgrowth. The highly regulated addition of sulfated carbohydrate structure may modulate the adhesive properties of TNR over the course of development and during synapse maintenance. In Mus musculus (Mouse), this protein is Tenascin-R (Tnr).